A 405-amino-acid polypeptide reads, in one-letter code: Tyrosine--tRNA ligase (405 aa).

Residues 41 to 50 (PTAPDLHLGH) carry the 'HIGH' region motif. The 'KMSKS' region motif lies at 225 to 229 (KMSKS). An ATP-binding site is contributed by Lys-228. One can recognise an S4 RNA-binding domain in the interval 342–404 (EPLLVWVLSK…GKKGKFLKII (63 aa)).

Belongs to the class-I aminoacyl-tRNA synthetase family. TyrS type 2 subfamily. In terms of assembly, homodimer.

Its subcellular location is the cytoplasm. The enzyme catalyses tRNA(Tyr) + L-tyrosine + ATP = L-tyrosyl-tRNA(Tyr) + AMP + diphosphate + H(+). Catalyzes the attachment of tyrosine to tRNA(Tyr) in a two-step reaction: tyrosine is first activated by ATP to form Tyr-AMP and then transferred to the acceptor end of tRNA(Tyr). In Leptospira interrogans serogroup Icterohaemorrhagiae serovar Lai (strain 56601), this protein is Tyrosine--tRNA ligase.